The following is a 503-amino-acid chain: D-alanine--D-alanyl carrier protein ligase (503 aa).

Residue 151–152 (TS) coordinates ATP. Aspartate 196 contacts D-alanine. 291-296 (NTYGPT) provides a ligand contact to ATP. Valine 300 is a binding site for D-alanine. ATP contacts are provided by residues aspartate 382, 393–396 (YNGR), and lysine 491. Position 491 (lysine 491) interacts with D-alanine.

This sequence belongs to the ATP-dependent AMP-binding enzyme family. DltA subfamily.

The protein localises to the cytoplasm. It carries out the reaction holo-[D-alanyl-carrier protein] + D-alanine + ATP = D-alanyl-[D-alanyl-carrier protein] + AMP + diphosphate. The protein operates within cell wall biogenesis; lipoteichoic acid biosynthesis. Its function is as follows. Catalyzes the first step in the D-alanylation of lipoteichoic acid (LTA), the activation of D-alanine and its transfer onto the D-alanyl carrier protein (Dcp) DltC. In an ATP-dependent two-step reaction, forms a high energy D-alanyl-AMP intermediate, followed by transfer of the D-alanyl residue as a thiol ester to the phosphopantheinyl prosthetic group of the Dcp. D-alanylation of LTA plays an important role in modulating the properties of the cell wall in Gram-positive bacteria, influencing the net charge of the cell wall. This Bacillus anthracis (strain A0248) protein is D-alanine--D-alanyl carrier protein ligase.